A 583-amino-acid polypeptide reads, in one-letter code: Trehalase (583 aa).

Residues 1 to 23 (MPGRTWELCLLLLLGLGLGSQEA) form the signal peptide. A glycan (N-linked (GlcNAc...) asparagine) is linked at Asn-78. Substrate contacts are provided by residues Arg-168, 175 to 176 (WD), Asn-212, and 221 to 223 (RSQ). Residues Asn-239 and Asn-261 are each glycosylated (N-linked (GlcNAc...) asparagine). Residues 286–288 (RPE) and Gly-319 each bind substrate. Residue Asp-321 is the Proton donor/acceptor of the active site. Asn-369 is a glycosylation site (N-linked (GlcNAc...) asparagine). Residue Glu-514 is the Proton donor/acceptor of the active site. Glu-529 lines the substrate pocket. The GPI-anchor amidated serine moiety is linked to residue Ser-556. Positions 557–583 (GAKLAFLEPHCLAATLLPSLLLSLLPW) are cleaved as a propeptide — removed in mature form.

Belongs to the glycosyl hydrolase 37 family. Homodimer; disulfide-linked. Expressed in kidney, liver and small intestine. Also more weakly expressed in pancreas.

Its subcellular location is the cell membrane. It catalyses the reaction alpha,alpha-trehalose + H2O = alpha-D-glucose + beta-D-glucose. Functionally, intestinal trehalase is probably involved in the hydrolysis of ingested trehalose. This is Trehalase from Homo sapiens (Human).